Reading from the N-terminus, the 102-residue chain is Small ribosomal subunit protein uS10 (102 aa).

This sequence belongs to the universal ribosomal protein uS10 family. Part of the 30S ribosomal subunit.

Involved in the binding of tRNA to the ribosomes. This chain is Small ribosomal subunit protein uS10, found in Streptococcus thermophilus (strain ATCC BAA-491 / LMD-9).